A 957-amino-acid chain; its full sequence is Glycine dehydrogenase (decarboxylating) (957 aa).

Lys-708 carries the N6-(pyridoxal phosphate)lysine modification.

It belongs to the GcvP family. In terms of assembly, the glycine cleavage system is composed of four proteins: P, T, L and H. The cofactor is pyridoxal 5'-phosphate.

It carries out the reaction N(6)-[(R)-lipoyl]-L-lysyl-[glycine-cleavage complex H protein] + glycine + H(+) = N(6)-[(R)-S(8)-aminomethyldihydrolipoyl]-L-lysyl-[glycine-cleavage complex H protein] + CO2. In terms of biological role, the glycine cleavage system catalyzes the degradation of glycine. The P protein binds the alpha-amino group of glycine through its pyridoxal phosphate cofactor; CO(2) is released and the remaining methylamine moiety is then transferred to the lipoamide cofactor of the H protein. In Salmonella paratyphi B (strain ATCC BAA-1250 / SPB7), this protein is Glycine dehydrogenase (decarboxylating).